Here is a 469-residue protein sequence, read N- to C-terminus: Putative dipeptidase SAB1611c (469 aa).

A Zn(2+)-binding site is contributed by His-84. Asp-86 is an active-site residue. Zn(2+) is bound at residue Asp-115. The Proton acceptor role is filled by Glu-149. Zn(2+)-binding residues include Glu-150, Asp-173, and His-440.

It belongs to the peptidase M20A family. Zn(2+) serves as cofactor.

The chain is Putative dipeptidase SAB1611c from Staphylococcus aureus (strain bovine RF122 / ET3-1).